The chain runs to 492 residues: N-succinylglutamate 5-semialdehyde dehydrogenase (492 aa).

220-225 (GSANTG) lines the NAD(+) pocket. Active-site residues include glutamate 243 and cysteine 277.

It belongs to the aldehyde dehydrogenase family. AstD subfamily.

The catalysed reaction is N-succinyl-L-glutamate 5-semialdehyde + NAD(+) + H2O = N-succinyl-L-glutamate + NADH + 2 H(+). Its pathway is amino-acid degradation; L-arginine degradation via AST pathway; L-glutamate and succinate from L-arginine: step 4/5. In terms of biological role, catalyzes the NAD-dependent reduction of succinylglutamate semialdehyde into succinylglutamate. This chain is N-succinylglutamate 5-semialdehyde dehydrogenase, found in Escherichia coli O139:H28 (strain E24377A / ETEC).